A 249-amino-acid polypeptide reads, in one-letter code: General transcription factor IIF subunit 2 (249 aa).

An N-acetylalanine modification is found at alanine 2. Lysine 22, lysine 33, and lysine 137 each carry N6-acetyllysine. Phosphoserine is present on serine 142. Positions 227 and 229 each coordinate DNA. Serine 248 is subject to Phosphoserine.

It belongs to the TFIIF beta subunit family. As to quaternary structure, heterodimer of an alpha and a beta subunit. Interacts with HTATSF1 and URI1. Interacts with GPBP1. Interacts with GTF2B (via N-terminus); this interaction is inhibited in presence of GTF2F1. Part of TBP-based Pol II pre-initiation complex (PIC), in which Pol II core assembles with general transcription factors and other specific initiation factors including GTF2E1, GTF2E2, GTF2F1, GTF2F2, TCEA1, ERCC2, ERCC3, GTF2H2, GTF2H3, GTF2H4, GTF2H5, GTF2A1, GTF2A2, GTF2B and TBP; this large multi-subunit PIC complex mediates DNA unwinding and targets Pol II core to the transcription start site where the first phosphodiester bond forms.

It localises to the nucleus. Functionally, TFIIF is a general transcription initiation factor that binds to RNA polymerase II and helps to recruit it to the initiation complex in collaboration with TFIIB. The protein is General transcription factor IIF subunit 2 (Gtf2f2) of Mus musculus (Mouse).